Consider the following 336-residue polypeptide: Quinolinate synthase (336 aa).

2 residues coordinate iminosuccinate: H25 and S42. C86 contacts [4Fe-4S] cluster. Iminosuccinate contacts are provided by residues 117-119 (YIN) and S138. C198 contacts [4Fe-4S] cluster. Iminosuccinate-binding positions include 224–226 (HPE) and T241. C288 is a binding site for [4Fe-4S] cluster.

Belongs to the quinolinate synthase family. Type 3 subfamily. [4Fe-4S] cluster serves as cofactor.

The protein resides in the cytoplasm. It carries out the reaction iminosuccinate + dihydroxyacetone phosphate = quinolinate + phosphate + 2 H2O + H(+). It participates in cofactor biosynthesis; NAD(+) biosynthesis; quinolinate from iminoaspartate: step 1/1. Catalyzes the condensation of iminoaspartate with dihydroxyacetone phosphate to form quinolinate. The sequence is that of Quinolinate synthase from Helicobacter pylori (strain ATCC 700392 / 26695) (Campylobacter pylori).